The chain runs to 23 residues: M-poneritoxin-Nc1a (23 aa).

It belongs to the non-disulfide-bridged peptide (NDBP) superfamily. Medium-length antimicrobial peptide (group 3) family. Ponericin-W subfamily. In terms of tissue distribution, expressed by the venom gland.

The protein localises to the secreted. The protein resides in the target cell membrane. Its function is as follows. Membrane-perturbating peptide with multiple activities. It is insecticidal, since it induces contractile paralysis in insects (L.cuprina) during several hours, and death after 24 hours. It shows antibacterial activity with higher activity against Gram-positive than Gram-negative bacteria. It is also antiparasitic, since it potently inhibits the larval development of the major pathogenic nematode of ruminants (H.contortus, IC(50)=5.1 uM), but fails to reduce the motility of adult males of the other nematode B.malayi. It also shows cytotoxic activity against HEK293 cells (EC(50)=12-14 uM) and induces hemolysis in human erythrocytes (EC(50)=28.6-48.2 uM). In addition, it causes an important increase in intracellular calcium concentration on neuronal and epithelial cell lines, which supports a non-specific membrane perturbation mechanism of action. In vivo, it induces pain by intraplantar injection into mice, suggesting a defensive function against vertebrate predators. The polypeptide is M-poneritoxin-Nc1a (Neoponera commutata (Large hunting ant)).